The following is a 98-amino-acid chain: MIPGGLSEAKPATPEIQEIVDKVKPQLEEKTNETYGKLEAVQYKTQVVAGTNYYIKVRAGDNKYMHLKVFKSLPGQNEDLVLTGYQVDKNKDDELTGF.

Methionine 1 bears the N-acetylmethionine mark. The Secondary area of contact motif lies at 46–50 (QVVAG).

It belongs to the cystatin family. As to expression, expressed in the skin throughout the epidermis.

It is found in the cytoplasm. Its function is as follows. This is an intracellular thiol proteinase inhibitor. Has an important role in desmosome-mediated cell-cell adhesion in the lower levels of the epidermis. The sequence is that of Cystatin-A (CSTA) from Homo sapiens (Human).